The chain runs to 368 residues: Repressor ROX1 (368 aa).

A DNA-binding region (HMG box) is located at residues 10-83 (IPRPKNAFIL…EHERKYPEYK (74 aa)). Disordered stretches follow at residues 100–121 (IEQQ…QPQL) and 242–273 (SSQT…SSVL). The segment covering 102 to 121 (QQQQQQQKEQQQQKQSQPQL) has biased composition (low complexity).

Its subcellular location is the nucleus. Transcription factor that represses the expression of HEM13, COX5B, ANB1, CYC7 or AAC3 (hypoxic function). Binds to the DNA sequence 5'-RRRTAACAAGAG-3'. This Saccharomyces cerevisiae (strain ATCC 204508 / S288c) (Baker's yeast) protein is Repressor ROX1 (ROX1).